We begin with the raw amino-acid sequence, 405 residues long: MKTPRRFPLIALTVAAVLTAAALYWWYSHSTASTVQNRQGTEQQRASNSQGSAKRAGNAPPVQAAEALRQNVPQYLSGLGTVTAANTVTLRSRVDGDLVALHFNEGQEVAAGQLLAEIDPRPYEVALMQAEGQLAKDRATLTNARRDLARYEKLAQTQLVSAQELDTQRARVSETLGTIKADEGSVASARLNLTYSRVTAPIAGRVGLKQVDVGNYVSSGDANGIVVIAQTHPIDLVFSLPESDIASVLSAQKNGKLPVEAWDRNNKNLLTRGTLLSMDNQIDSTTGTVKLKARFDNQDDRLFPNQFVNARLKIGTLEDAIVIPAAALQMGNESHFVWVINGDSTVSKKIVASGLQGSGQVVISAGLQAGEKVVTDGIDRLTDGAQTEIVPAQASTPLPASGASS.

Residues 1–22 (MKTPRRFPLIALTVAAVLTAAA) form the signal peptide. Over residues 35 to 52 (VQNRQGTEQQRASNSQGS) the composition is skewed to polar residues. A disordered region spans residues 35 to 62 (VQNRQGTEQQRASNSQGSAKRAGNAPPV).

This sequence belongs to the membrane fusion protein (MFP) (TC 8.A.1) family. In terms of assembly, part of a tripartite efflux system composed of MdtA, MdtB and MdtC.

The protein localises to the cell inner membrane. The polypeptide is Multidrug resistance protein MdtA (Erwinia amylovora (strain ATCC 49946 / CCPPB 0273 / Ea273 / 27-3)).